A 461-amino-acid chain; its full sequence is Divalent metal cation transporter MntH (461 aa).

11 helical membrane passes run 56–76 (AMAFFGPGYLVAVGYMDPGNW), 89–109 (TLLAVALVSNIMAIVLQSLCA), 132–152 (AMVLWLLAEIAIIATDIAEVI), 160–180 (LIFGIPLELGVLITALDVFLI), 193–213 (ALVITLLGVIAVCFAIQLALA), 230–250 (IVTNPDMLYLALGILGATVMP), 285–305 (IALMFALLINASILILAAATF), 322–342 (LLAPLLGLAIAPTLFGVALLC), 378–398 (AIAIVPAAGVTIFYGDSGTGQ), 399–419 (LLILTQVVLSLQLSFAVFPLV), and 433–453 (SPLWLSAIAWLIAVVIAALNV).

It belongs to the NRAMP family.

It localises to the cell inner membrane. H(+)-stimulated, divalent metal cation uptake system. The chain is Divalent metal cation transporter MntH from Agrobacterium fabrum (strain C58 / ATCC 33970) (Agrobacterium tumefaciens (strain C58)).